Consider the following 362-residue polypeptide: Heat-inducible transcription repressor HrcA (362 aa).

Belongs to the HrcA family.

Its function is as follows. Negative regulator of class I heat shock genes (grpE-dnaK-dnaJ and groELS operons). Prevents heat-shock induction of these operons. This is Heat-inducible transcription repressor HrcA from Rhodopseudomonas palustris (strain ATCC BAA-98 / CGA009).